We begin with the raw amino-acid sequence, 380 residues long: Queuine tRNA-ribosyltransferase (380 aa).

D93 functions as the Proton acceptor in the catalytic mechanism. Residues 93-97 (DSGGF), D147, Q198, and G225 contribute to the substrate site. The RNA binding stretch occupies residues 256–262 (GVGLPSN). The active-site Nucleophile is the D275. The segment at 280–284 (ARNGR) is RNA binding; important for wobble base 34 recognition. Zn(2+) contacts are provided by C313, C315, C318, and H344.

It belongs to the queuine tRNA-ribosyltransferase family. As to quaternary structure, homodimer. Within each dimer, one monomer is responsible for RNA recognition and catalysis, while the other monomer binds to the replacement base PreQ1. Zn(2+) is required as a cofactor.

It catalyses the reaction 7-aminomethyl-7-carbaguanine + guanosine(34) in tRNA = 7-aminomethyl-7-carbaguanosine(34) in tRNA + guanine. It functions in the pathway tRNA modification; tRNA-queuosine biosynthesis. Catalyzes the base-exchange of a guanine (G) residue with the queuine precursor 7-aminomethyl-7-deazaguanine (PreQ1) at position 34 (anticodon wobble position) in tRNAs with GU(N) anticodons (tRNA-Asp, -Asn, -His and -Tyr). Catalysis occurs through a double-displacement mechanism. The nucleophile active site attacks the C1' of nucleotide 34 to detach the guanine base from the RNA, forming a covalent enzyme-RNA intermediate. The proton acceptor active site deprotonates the incoming PreQ1, allowing a nucleophilic attack on the C1' of the ribose to form the product. After dissociation, two additional enzymatic reactions on the tRNA convert PreQ1 to queuine (Q), resulting in the hypermodified nucleoside queuosine (7-(((4,5-cis-dihydroxy-2-cyclopenten-1-yl)amino)methyl)-7-deazaguanosine). This Clostridium perfringens (strain ATCC 13124 / DSM 756 / JCM 1290 / NCIMB 6125 / NCTC 8237 / Type A) protein is Queuine tRNA-ribosyltransferase.